Consider the following 176-residue polypeptide: Putative REP-associated tyrosine transposase (176 aa).

Residues histidine 59 and histidine 61 each contribute to the Mg(2+) site. Tyrosine 148 functions as the Nucleophile in the catalytic mechanism.

This sequence belongs to the transposase 17 family. RAYT subfamily. As to quaternary structure, homodimer. Mg(2+) is required as a cofactor.

Transposase responsible for transposition an insertion sequence (IS) element. Transposition occurs in 2 main steps, excision from the donor DNA 'top strand' into a single strand circle and its subsequent reinsertion into the DNA target. This increases the copy number of the IS. This is Putative REP-associated tyrosine transposase from Haemophilus influenzae (strain ATCC 51907 / DSM 11121 / KW20 / Rd).